Reading from the N-terminus, the 301-residue chain is Phosphatidylserine decarboxylase proenzyme (301 aa).

Active-site charge relay system; for autoendoproteolytic cleavage activity residues include Asp-115, His-171, and Ser-258. Catalysis depends on Ser-258, which acts as the Schiff-base intermediate with substrate; via pyruvic acid; for decarboxylase activity. Ser-258 is modified (pyruvic acid (Ser); by autocatalysis).

It belongs to the phosphatidylserine decarboxylase family. PSD-B subfamily. Prokaryotic type II sub-subfamily. As to quaternary structure, heterodimer of a large membrane-associated beta subunit and a small pyruvoyl-containing alpha subunit. The cofactor is pyruvate. In terms of processing, is synthesized initially as an inactive proenzyme. Formation of the active enzyme involves a self-maturation process in which the active site pyruvoyl group is generated from an internal serine residue via an autocatalytic post-translational modification. Two non-identical subunits are generated from the proenzyme in this reaction, and the pyruvate is formed at the N-terminus of the alpha chain, which is derived from the carboxyl end of the proenzyme. The autoendoproteolytic cleavage occurs by a canonical serine protease mechanism, in which the side chain hydroxyl group of the serine supplies its oxygen atom to form the C-terminus of the beta chain, while the remainder of the serine residue undergoes an oxidative deamination to produce ammonia and the pyruvoyl prosthetic group on the alpha chain. During this reaction, the Ser that is part of the protease active site of the proenzyme becomes the pyruvoyl prosthetic group, which constitutes an essential element of the active site of the mature decarboxylase.

It is found in the cell membrane. It carries out the reaction a 1,2-diacyl-sn-glycero-3-phospho-L-serine + H(+) = a 1,2-diacyl-sn-glycero-3-phosphoethanolamine + CO2. Its pathway is phospholipid metabolism; phosphatidylethanolamine biosynthesis; phosphatidylethanolamine from CDP-diacylglycerol: step 2/2. Functionally, catalyzes the formation of phosphatidylethanolamine (PtdEtn) from phosphatidylserine (PtdSer). This Chlamydia pneumoniae (Chlamydophila pneumoniae) protein is Phosphatidylserine decarboxylase proenzyme.